Consider the following 103-residue polypeptide: Urease subunit beta (103 aa).

Belongs to the urease beta subunit family. In terms of assembly, heterotrimer of UreA (gamma), UreB (beta) and UreC (alpha) subunits. Three heterotrimers associate to form the active enzyme.

The protein localises to the cytoplasm. It carries out the reaction urea + 2 H2O + H(+) = hydrogencarbonate + 2 NH4(+). The protein operates within nitrogen metabolism; urea degradation; CO(2) and NH(3) from urea (urease route): step 1/1. In terms of biological role, ureolysis may allow urea to be employed as a nitrogen source for growth and produces ammonia which may protect from killing at low pH. The sequence is that of Urease subunit beta from Streptococcus salivarius (strain 57.I).